Reading from the N-terminus, the 358-residue chain is NADH-quinone oxidoreductase subunit H (358 aa).

8 consecutive transmembrane segments (helical) span residues 29 to 49 (LIKI…LTLW), 95 to 115 (GLFY…WAVI), 130 to 150 (LLLV…AGWA), 176 to 196 (FCFL…IVAV), 206 to 226 (GLGF…VYLI), 258 to 280 (GFAI…AVVM), 297 to 317 (GWIW…WIRA), and 334 to 354 (IFIP…LSPW).

This sequence belongs to the complex I subunit 1 family. As to quaternary structure, NDH-1 is composed of 14 different subunits. Subunits NuoA, H, J, K, L, M, N constitute the membrane sector of the complex.

The protein localises to the cell inner membrane. It carries out the reaction a quinone + NADH + 5 H(+)(in) = a quinol + NAD(+) + 4 H(+)(out). NDH-1 shuttles electrons from NADH, via FMN and iron-sulfur (Fe-S) centers, to quinones in the respiratory chain. The immediate electron acceptor for the enzyme in this species is believed to be ubiquinone. Couples the redox reaction to proton translocation (for every two electrons transferred, four hydrogen ions are translocated across the cytoplasmic membrane), and thus conserves the redox energy in a proton gradient. This subunit may bind ubiquinone. In Acidovorax sp. (strain JS42), this protein is NADH-quinone oxidoreductase subunit H.